We begin with the raw amino-acid sequence, 211 residues long: Large ribosomal subunit protein uL4 (211 aa).

Positions 41-53 (QAHSRQGTASTLT) are enriched in polar residues. The segment at 41–85 (QAHSRQGTASTLTRAEVRGGGRKPYKQKGTGRARQGSIRTPLRPG) is disordered. The span at 60–71 (GGRKPYKQKGTG) shows a compositional bias: basic residues.

Belongs to the universal ribosomal protein uL4 family. Part of the 50S ribosomal subunit.

Its function is as follows. One of the primary rRNA binding proteins, this protein initially binds near the 5'-end of the 23S rRNA. It is important during the early stages of 50S assembly. It makes multiple contacts with different domains of the 23S rRNA in the assembled 50S subunit and ribosome. Forms part of the polypeptide exit tunnel. The polypeptide is Large ribosomal subunit protein uL4 (Prochlorococcus marinus (strain SARG / CCMP1375 / SS120)).